The following is a 366-amino-acid chain: Agamous-like MADS-box protein AGL36 (366 aa).

The 59-residue stretch at 1–59 (MKKVKLSLIANERSRKTSFIKRKDGIFKKLHELSTLCGVQACALIYSPFIPVPESWPSR) folds into the MADS-box domain. Residues 86 to 115 (TYLMERITKAKEQLKNLAAENRELQVRRFM) are a coiled coil.

As to quaternary structure, interacts with AGL62.

The protein resides in the nucleus. Functionally, probable transcription factor. This is Agamous-like MADS-box protein AGL36 (AGL36) from Arabidopsis thaliana (Mouse-ear cress).